The following is a 385-amino-acid chain: Beta sliding clamp (385 aa).

This sequence belongs to the beta sliding clamp family. As to quaternary structure, forms a ring-shaped head-to-tail homodimer around DNA which binds and tethers DNA polymerases and other proteins to the DNA. The DNA replisome complex has a single clamp-loading complex (3 tau and 1 each of delta, delta', psi and chi subunits) which binds 3 Pol III cores (1 core on the leading strand and 2 on the lagging strand) each with a beta sliding clamp dimer. Additional proteins in the replisome are other copies of gamma, psi and chi, Ssb, DNA helicase and RNA primase.

It is found in the cytoplasm. Its function is as follows. Confers DNA tethering and processivity to DNA polymerases and other proteins. Acts as a clamp, forming a ring around DNA (a reaction catalyzed by the clamp-loading complex) which diffuses in an ATP-independent manner freely and bidirectionally along dsDNA. Initially characterized for its ability to contact the catalytic subunit of DNA polymerase III (Pol III), a complex, multichain enzyme responsible for most of the replicative synthesis in bacteria; Pol III exhibits 3'-5' exonuclease proofreading activity. The beta chain is required for initiation of replication as well as for processivity of DNA replication. This is Beta sliding clamp (dnaN) from Borreliella burgdorferi (strain ATCC 35210 / DSM 4680 / CIP 102532 / B31) (Borrelia burgdorferi).